Here is a 738-residue protein sequence, read N- to C-terminus: Probable trehalase (738 aa).

Positions 1–44 are disordered; sequence MLQGMPKRSGSISELHDPFSSPDVYYGPATDPRRQKQPNKYSRT. Substrate-binding positions include R289, 296–297, N333, R342, 342–344, and G463; these read WD and RSQ. Active-site proton donor/acceptor residues include D465 and E660.

The protein belongs to the glycosyl hydrolase 37 family.

The catalysed reaction is alpha,alpha-trehalose + H2O = alpha-D-glucose + beta-D-glucose. The protein is Probable trehalase (NTH2) of Eremothecium gossypii (strain ATCC 10895 / CBS 109.51 / FGSC 9923 / NRRL Y-1056) (Yeast).